Consider the following 351-residue polypeptide: GDP-mannose 4,6-dehydratase (351 aa).

NADP(+)-binding positions include 11-16, 66-67, 88-92, and Tyr-103; these read GVTGQD, DM, and LAAQS. Residue Thr-135 is part of the active site. Catalysis depends on nucleophile residues Glu-137 and Tyr-159. Positions 163, 189, and 194 each coordinate NADP(+).

The protein belongs to the NAD(P)-dependent epimerase/dehydratase family. GDP-mannose 4,6-dehydratase subfamily. NADP(+) serves as cofactor.

The enzyme catalyses GDP-alpha-D-mannose = GDP-4-dehydro-alpha-D-rhamnose + H2O. It functions in the pathway nucleotide-sugar biosynthesis; GDP-L-fucose biosynthesis via de novo pathway; GDP-L-fucose from GDP-alpha-D-mannose: step 1/2. Its function is as follows. Catalyzes the conversion of GDP-D-mannose to GDP-4-dehydro-6-deoxy-D-mannose. In Sinorhizobium fredii (strain HH103), this protein is GDP-mannose 4,6-dehydratase.